The following is a 379-amino-acid chain: F-box/kelch-repeat protein At4g33900 (379 aa).

An F-box domain is found at 9–55; it reads IKRFLMLPDDLVFNCLARVSRLHYPTLSLVSKKFRFLLASKELYQTR. Kelch repeat units lie at residues 116 to 175, 176 to 222, and 262 to 308; these read EIYA…TLDG, RIYV…LSIS, and SCCV…RNFK.

The sequence is that of F-box/kelch-repeat protein At4g33900 from Arabidopsis thaliana (Mouse-ear cress).